The following is a 381-amino-acid chain: tRNA pseudouridine synthase Pus10 (381 aa).

Catalysis depends on D226, which acts as the Nucleophile.

It belongs to the pseudouridine synthase Pus10 family.

The catalysed reaction is uridine(54) in tRNA = pseudouridine(54) in tRNA. It catalyses the reaction uridine(55) in tRNA = pseudouridine(55) in tRNA. Its function is as follows. Responsible for synthesis of pseudouridine from uracil-54 and uracil-55 in the psi GC loop of transfer RNAs. The polypeptide is tRNA pseudouridine synthase Pus10 (Nitrosopumilus maritimus (strain SCM1)).